Reading from the N-terminus, the 514-residue chain is Tryptophan decarboxylase 1 (514 aa).

Residue phenylalanine 104 participates in serotonin binding. Threonine 175 and serine 176 together coordinate pyridoxal 5'-phosphate. Histidine 214 provides a ligand contact to serotonin. Pyridoxal 5'-phosphate is bound at residue threonine 273. At lysine 330 the chain carries N6-(pyridoxal phosphate)lysine. Tyrosine 359 (proton donor) is an active-site residue. Pyridoxal 5'-phosphate-binding residues include valine 380 and glycine 381.

The protein belongs to the group II decarboxylase family. As to quaternary structure, forms homodimers. It depends on pyridoxal 5'-phosphate as a cofactor.

It catalyses the reaction L-tryptophan + H(+) = tryptamine + CO2. The catalysed reaction is 5-hydroxy-L-tryptophan + H(+) = serotonin + CO2. In terms of biological role, involved in serotonin biosynthesis. Catalyzes the decarboxylation of L-tryptophan to produce tryptamine, which is converted to serotonin by tryptamine 5-hydroxylase. May play a major role in serotonin biosynthesis during senescence. Accumulation of serotonin attenuates leaf senescence. Catalyzes the decarboxylation of 5-hydroxy-L-tryptophan to produce serotonin. The sequence is that of Tryptophan decarboxylase 1 from Oryza sativa subsp. japonica (Rice).